Reading from the N-terminus, the 966-residue chain is Insulin-degrading enzyme-like 2 (966 aa).

His71 contributes to the Zn(2+) binding site. The active-site Proton acceptor is the Glu74. His75 serves as a coordination point for Zn(2+). The active site involves Glu145. Glu152 is a Zn(2+) binding site.

Belongs to the peptidase M16 family. Zn(2+) is required as a cofactor.

The sequence is that of Insulin-degrading enzyme-like 2 from Arabidopsis thaliana (Mouse-ear cress).